Consider the following 597-residue polypeptide: Arginine--tRNA ligase (597 aa).

A 'HIGH' region motif is present at residues 125 to 135 (PNTNKPLHLGH).

This sequence belongs to the class-I aminoacyl-tRNA synthetase family. In terms of assembly, monomer.

It is found in the cytoplasm. The catalysed reaction is tRNA(Arg) + L-arginine + ATP = L-arginyl-tRNA(Arg) + AMP + diphosphate. The protein is Arginine--tRNA ligase of Bacteroides fragilis (strain ATCC 25285 / DSM 2151 / CCUG 4856 / JCM 11019 / LMG 10263 / NCTC 9343 / Onslow / VPI 2553 / EN-2).